The primary structure comprises 473 residues: Glutamate--tRNA ligase 1 (473 aa).

The short motif at 11–21 (PSPTGFLHIGG) is the 'HIGH' region element. Positions 111 to 132 (REQARKEGRPPRYDGRWRDRAE) are disordered. Residues 240-244 (KLSKR) carry the 'KMSKS' region motif. An ATP-binding site is contributed by lysine 243.

It belongs to the class-I aminoacyl-tRNA synthetase family. Glutamate--tRNA ligase type 1 subfamily. In terms of assembly, monomer.

The protein resides in the cytoplasm. The enzyme catalyses tRNA(Glu) + L-glutamate + ATP = L-glutamyl-tRNA(Glu) + AMP + diphosphate. Its function is as follows. Catalyzes the attachment of glutamate to tRNA(Glu) in a two-step reaction: glutamate is first activated by ATP to form Glu-AMP and then transferred to the acceptor end of tRNA(Glu). This is Glutamate--tRNA ligase 1 from Beijerinckia indica subsp. indica (strain ATCC 9039 / DSM 1715 / NCIMB 8712).